A 537-amino-acid polypeptide reads, in one-letter code: Exodeoxyribonuclease 7 large subunit (537 aa).

Positions 508–537 are disordered; that stretch reads GEGAPVEPPQAARPSKGARTKAAQPSLFDD.

The protein belongs to the XseA family. Heterooligomer composed of large and small subunits.

Its subcellular location is the cytoplasm. The catalysed reaction is Exonucleolytic cleavage in either 5'- to 3'- or 3'- to 5'-direction to yield nucleoside 5'-phosphates.. Its function is as follows. Bidirectionally degrades single-stranded DNA into large acid-insoluble oligonucleotides, which are then degraded further into small acid-soluble oligonucleotides. The sequence is that of Exodeoxyribonuclease 7 large subunit from Azorhizobium caulinodans (strain ATCC 43989 / DSM 5975 / JCM 20966 / LMG 6465 / NBRC 14845 / NCIMB 13405 / ORS 571).